The sequence spans 150 residues: 3-hydroxyacyl-[acyl-carrier-protein] dehydratase FabZ (150 aa).

Residue histidine 53 is part of the active site.

It belongs to the thioester dehydratase family. FabZ subfamily.

It localises to the cytoplasm. It catalyses the reaction a (3R)-hydroxyacyl-[ACP] = a (2E)-enoyl-[ACP] + H2O. In terms of biological role, involved in unsaturated fatty acids biosynthesis. Catalyzes the dehydration of short chain beta-hydroxyacyl-ACPs and long chain saturated and unsaturated beta-hydroxyacyl-ACPs. This is 3-hydroxyacyl-[acyl-carrier-protein] dehydratase FabZ from Proteus mirabilis (strain HI4320).